Consider the following 289-residue polypeptide: DegV domain-containing protein YteA (289 aa).

Positions 3–284 (FQIMTDSTAD…DGTIAIFSIS (282 aa)) constitute a DegV domain. The hexadecanoate site is built by Thr-62 and Ser-94.

Functionally, may bind long-chain fatty acids, such as palmitate, and may play a role in lipid transport or fatty acid metabolism. The protein is DegV domain-containing protein YteA (yteA) of Lactococcus lactis subsp. lactis (strain IL1403) (Streptococcus lactis).